A 303-amino-acid polypeptide reads, in one-letter code: 2-dehydropantoate 2-reductase (303 aa).

NADP(+)-binding positions include 7–12, N98, and A122; that span reads GCGALG. N98 is a binding site for substrate. K176 (proton donor) is an active-site residue. Residues N180, N184, N194, and S244 each contribute to the substrate site. E256 is a binding site for NADP(+).

The protein belongs to the ketopantoate reductase family. As to quaternary structure, monomer.

It localises to the cytoplasm. It catalyses the reaction (R)-pantoate + NADP(+) = 2-dehydropantoate + NADPH + H(+). Its pathway is cofactor biosynthesis; (R)-pantothenate biosynthesis; (R)-pantoate from 3-methyl-2-oxobutanoate: step 2/2. Catalyzes the NADPH-dependent reduction of ketopantoate into pantoic acid. The protein is 2-dehydropantoate 2-reductase (panE) of Shigella flexneri.